Here is a 472-residue protein sequence, read N- to C-terminus: 3-isopropylmalate dehydratase large subunit (472 aa).

Positions 347, 407, and 410 each coordinate [4Fe-4S] cluster.

This sequence belongs to the aconitase/IPM isomerase family. LeuC type 1 subfamily. Heterodimer of LeuC and LeuD. Requires [4Fe-4S] cluster as cofactor.

The enzyme catalyses (2R,3S)-3-isopropylmalate = (2S)-2-isopropylmalate. Its pathway is amino-acid biosynthesis; L-leucine biosynthesis; L-leucine from 3-methyl-2-oxobutanoate: step 2/4. Functionally, catalyzes the isomerization between 2-isopropylmalate and 3-isopropylmalate, via the formation of 2-isopropylmaleate. The protein is 3-isopropylmalate dehydratase large subunit of Synechococcus sp. (strain CC9902).